The sequence spans 328 residues: Putative glycosyltransferase 41 (328 aa).

This sequence belongs to the glycosyltransferase group 1 family. Glycosyltransferase 4 subfamily.

The polypeptide is Putative glycosyltransferase 41 (SIFV0041) (Sulfolobus islandicus filamentous virus (isolate Iceland/Hveragerdi) (SIFV)).